Consider the following 259-residue polypeptide: (3R)-3-hydroxyacyl-CoA dehydrogenase (259 aa).

Residues 13–21 (LVTGAGSGI) and 40–41 (DL) contribute to the NAD(+) site. Ser-58 bears the Phosphoserine mark. Lys-66 carries the post-translational modification N6-acetyllysine. Residue 72 to 74 (ADV) coordinates NAD(+). Ser-154 contacts substrate. Lys-158 is subject to N6-succinyllysine. The active-site Proton acceptor is Tyr-167. Residues 167–171 (YASSK) and 200–202 (IAT) contribute to the NAD(+) site. Lys-171 carries the post-translational modification N6-succinyllysine.

This sequence belongs to the short-chain dehydrogenases/reductases (SDR) family. In terms of assembly, heterotetramer with CBR4; contains two molecules of HSD17B8 and CBR4. In terms of tissue distribution, kidney, liver, testis, ovary and spleen. Oviduct, uterus, mammary gland, vagina, prostate, clitoral gland and moderately heart, dorsal skin, brain and lung.

The protein localises to the mitochondrion matrix. The enzyme catalyses a (3R)-3-hydroxyacyl-CoA + NAD(+) = a 3-oxoacyl-CoA + NADH + H(+). It catalyses the reaction 17beta-estradiol + NAD(+) = estrone + NADH + H(+). The catalysed reaction is testosterone + NAD(+) = androst-4-ene-3,17-dione + NADH + H(+). It carries out the reaction 17beta-hydroxy-5alpha-androstan-3-one + NAD(+) = 5alpha-androstan-3,17-dione + NADH + H(+). Its pathway is lipid metabolism; fatty acid biosynthesis. It functions in the pathway steroid biosynthesis; estrogen biosynthesis. It participates in lipid metabolism; mitochondrial fatty acid beta-oxidation. Its function is as follows. Required for the solubility and assembly of the heterotetramer 3-ketoacyl-[acyl carrier protein] (ACP) reductase functional complex (KAR or KAR1) that forms part of the mitochondrial fatty acid synthase (mtFAS). Alpha-subunit of the KAR complex, acts as scaffold protein, required for the stability of carbonyl reductase type-4 (CBR4, beta-subunit of the KAR complex) and for its 3-ketoacyl-ACP reductase activity, thereby participating in mitochondrial fatty acid biosynthesis. Catalyzes the NAD-dependent conversion of (3R)-3-hydroxyacyl-CoA into 3-ketoacyl-CoA (3-oxoacyl-CoA) with no chain length preference, this enzymatic activity is not needed for the KAR function. Prefers (3R)-3-hydroxyacyl-CoA over (3S)-3-hydroxyacyl-CoA and displays enzymatic activity only in the presence of NAD(+)(H). Cooperates with enoyl-CoA hydratase 1 in mitochondria, together they constitute an alternative route to the auxiliary enzyme pathways for the breakdown of Z-PUFA (cis polyunsaturated fatty acid) enoyl-esters. NAD-dependent 17-beta-hydroxysteroid dehydrogenase with highest activity towards estradiol. It efficiently catalyzes the oxidation of estradiol (E2), testosterone, and dihydrotestosterone. Primarily an oxidative enzyme, it can switch to a reductive mode determined in the appropriate physiologic milieu and catalyze the reduction of estrone (E1) to form biologically active estradiol (E2). This chain is (3R)-3-hydroxyacyl-CoA dehydrogenase (Hsd17b8), found in Mus musculus (Mouse).